The primary structure comprises 343 residues: N-acetyl-gamma-glutamyl-phosphate reductase (343 aa).

C150 is an active-site residue.

It belongs to the NAGSA dehydrogenase family. Type 1 subfamily.

It localises to the cytoplasm. The catalysed reaction is N-acetyl-L-glutamate 5-semialdehyde + phosphate + NADP(+) = N-acetyl-L-glutamyl 5-phosphate + NADPH + H(+). The protein operates within amino-acid biosynthesis; L-arginine biosynthesis; N(2)-acetyl-L-ornithine from L-glutamate: step 3/4. Its function is as follows. Catalyzes the NADPH-dependent reduction of N-acetyl-5-glutamyl phosphate to yield N-acetyl-L-glutamate 5-semialdehyde. The polypeptide is N-acetyl-gamma-glutamyl-phosphate reductase (Nitrosococcus oceani (strain ATCC 19707 / BCRC 17464 / JCM 30415 / NCIMB 11848 / C-107)).